The following is a 175-amino-acid chain: Keratin-associated protein 13-2 (175 aa).

5 tandem repeats follow at residues 46–55 (CQLGSSLYRG), 56–65 (CQEICWEPTS), 66–75 (CQTSYVESSP), 76–85 (CQTSCYRPRT), and 92–101 (CKTTYSGSLG). Residues 46–101 (CQLGSSLYRGCQEICWEPTSCQTSYVESSPCQTSCYRPRTSLLCSPCKTTYSGSLG) are 5 X 10 AA approximate repeats.

It belongs to the PMG family. Interacts with hair keratins.

In terms of biological role, in the hair cortex, hair keratin intermediate filaments are embedded in an interfilamentous matrix, consisting of hair keratin-associated proteins (KRTAP), which are essential for the formation of a rigid and resistant hair shaft through their extensive disulfide bond cross-linking with abundant cysteine residues of hair keratins. The matrix proteins include the high-sulfur and high-glycine-tyrosine keratins. This is Keratin-associated protein 13-2 (KRTAP13-2) from Homo sapiens (Human).